Consider the following 118-residue polypeptide: Holo-[acyl-carrier-protein] synthase (118 aa).

2 residues coordinate Mg(2+): Asp-5 and Glu-50.

This sequence belongs to the P-Pant transferase superfamily. AcpS family. Mg(2+) serves as cofactor.

It is found in the cytoplasm. The catalysed reaction is apo-[ACP] + CoA = holo-[ACP] + adenosine 3',5'-bisphosphate + H(+). Its function is as follows. Transfers the 4'-phosphopantetheine moiety from coenzyme A to a Ser of acyl-carrier-protein. This is Holo-[acyl-carrier-protein] synthase from Aliarcobacter butzleri (strain RM4018) (Arcobacter butzleri).